The primary structure comprises 537 residues: Cytochrome P450 monooxygenase yanC (537 aa).

Residues 1-21 form the signal peptide; sequence MALVHLTALAACGLLLVILRA. Cys-449 is a binding site for heme.

Belongs to the cytochrome P450 family. Requires heme as cofactor.

Its pathway is secondary metabolite biosynthesis; terpenoid biosynthesis. In terms of biological role, cytochrome P450 monooxygenase; part of the gene cluster that mediates the biosynthesis of yanuthone D, a fungal isoprenoid epoxycyclohexenone that acts as an antibiotic against fungi and bacteria. The first step of the pathway is the synthesis of 6-methylsalicylic acid (6-MSA) by the polyketide synthase yanA. 6-MSA is then converted to m-cresol by the decarboxylase yanB. The cytochrome P450 monooxygenase yanC then catalyzes the oxidation of m-cresol to toluquinol. Epoxidation of toluquinol is then performed by the short chain dehydrogenase yanD, with the help of yanE, and a further prenylation by yanG leads to 7-deacetoxyyanuthone A. The next step is the hydroxylation of C-22 of 7-deacetoxyyanuthone A by the cytochrome P450 monooxygenase yanH to yield 22-deacetylyanuthone A. O-Mevalon transferase yanI then attaches mevalon to the hydroxyl group of 22-deacetylyanuthone A to produce yanuthone E. Finally, the FAD-dependent monooxygenase yanF oxidizes the hydroxyl group at C15 of yanuthone E to form yanuthone D. Furthermore, several branching points in the pathway lead to the production of yanuthones F and G from 7-deacetoxyyanuthone A; yanuthones H and I from 22-deacetylyanuthone A; and yanuthone J from yanuthone E. YanC is also involved in the synthesis of yanuthone X1 which does not have 6-methylsalicylic acid (6-MSA) as precursor. The polypeptide is Cytochrome P450 monooxygenase yanC (Aspergillus niger (strain ATCC 1015 / CBS 113.46 / FGSC A1144 / LSHB Ac4 / NCTC 3858a / NRRL 328 / USDA 3528.7)).